The following is a 391-amino-acid chain: Chaperone protein DnaJ (391 aa).

The 65-residue stretch at 6–70 folds into the J domain; the sequence is DYYEILEVSR…EKRKLYDTYG (65 aa). The CR-type zinc finger occupies 145 to 226; that stretch reads GCIKNVKYTR…CKSRRMVDEV (82 aa). Zn(2+)-binding residues include Cys158, Cys161, Cys174, Cys177, Cys200, Cys203, Cys214, and Cys217. CXXCXGXG motif repeat units follow at residues 158-165, 174-181, 200-207, and 214-221; these read CPDCNGSG, CSDCNGEG, CPSCKGEG, and CKKCKSRR.

It belongs to the DnaJ family. As to quaternary structure, homodimer. Requires Zn(2+) as cofactor.

The protein resides in the cytoplasm. Functionally, participates actively in the response to hyperosmotic and heat shock by preventing the aggregation of stress-denatured proteins and by disaggregating proteins, also in an autonomous, DnaK-independent fashion. Unfolded proteins bind initially to DnaJ; upon interaction with the DnaJ-bound protein, DnaK hydrolyzes its bound ATP, resulting in the formation of a stable complex. GrpE releases ADP from DnaK; ATP binding to DnaK triggers the release of the substrate protein, thus completing the reaction cycle. Several rounds of ATP-dependent interactions between DnaJ, DnaK and GrpE are required for fully efficient folding. Also involved, together with DnaK and GrpE, in the DNA replication of plasmids through activation of initiation proteins. The chain is Chaperone protein DnaJ from Mycoplasmoides gallisepticum (strain R(low / passage 15 / clone 2)) (Mycoplasma gallisepticum).